We begin with the raw amino-acid sequence, 292 residues long: AT-hook motif nuclear-localized protein 23 (292 aa).

The interval His-23–Ile-100 is disordered. The span at Ser-60 to Val-79 shows a compositional bias: gly residues. The a.T hook DNA-binding region spans Arg-82–Lys-94. Residues Ala-106–Gly-242 enclose the PPC domain.

It localises to the nucleus. Transcription factor that specifically binds AT-rich DNA sequences related to the nuclear matrix attachment regions (MARs). The chain is AT-hook motif nuclear-localized protein 23 from Arabidopsis thaliana (Mouse-ear cress).